We begin with the raw amino-acid sequence, 954 residues long: Isoleucine--tRNA ligase (954 aa).

Residues 60-70 carry the 'HIGH' region motif; the sequence is PYANGALHMGH. Glu-564 provides a ligand contact to L-isoleucyl-5'-AMP. The 'KMSKS' region motif lies at 605 to 609; sequence KMSKS. An ATP-binding site is contributed by Lys-608. Residues Cys-923, Cys-926, Cys-943, and Cys-946 each contribute to the Zn(2+) site.

The protein belongs to the class-I aminoacyl-tRNA synthetase family. IleS type 1 subfamily. In terms of assembly, monomer. It depends on Zn(2+) as a cofactor.

It is found in the cytoplasm. It catalyses the reaction tRNA(Ile) + L-isoleucine + ATP = L-isoleucyl-tRNA(Ile) + AMP + diphosphate. Its function is as follows. Catalyzes the attachment of isoleucine to tRNA(Ile). As IleRS can inadvertently accommodate and process structurally similar amino acids such as valine, to avoid such errors it has two additional distinct tRNA(Ile)-dependent editing activities. One activity is designated as 'pretransfer' editing and involves the hydrolysis of activated Val-AMP. The other activity is designated 'posttransfer' editing and involves deacylation of mischarged Val-tRNA(Ile). The polypeptide is Isoleucine--tRNA ligase (Synechococcus sp. (strain ATCC 27144 / PCC 6301 / SAUG 1402/1) (Anacystis nidulans)).